Here is a 483-residue protein sequence, read N- to C-terminus: Argininosuccinate lyase (483 aa).

This sequence belongs to the lyase 1 family. Argininosuccinate lyase subfamily.

The protein resides in the cytoplasm. The enzyme catalyses 2-(N(omega)-L-arginino)succinate = fumarate + L-arginine. It functions in the pathway amino-acid biosynthesis; L-arginine biosynthesis; L-arginine from L-ornithine and carbamoyl phosphate: step 3/3. The polypeptide is Argininosuccinate lyase (Archaeoglobus fulgidus (strain ATCC 49558 / DSM 4304 / JCM 9628 / NBRC 100126 / VC-16)).